The primary structure comprises 381 residues: Na(+)/H(+) antiporter NhaA 1 (381 aa).

The next 11 helical transmembrane spans lie at 18–38 (GLLLLFVTVISLWAANSSYSA), 53–73 (ITHWINDGLMTIFFLLIGLEL), 89–109 (SLPIMAAFGGMLIPAATFLAL), 118–138 (GAGIPMATDIAFAIGILSLLG), 147–167 (VFLTALAVIDDLGAIIVIAVF), 170–190 (TSIGFVNLAIALGIWVFLFVL), 210–230 (YFMLNSGIHATITGVILAFVI), 251–271 (PVAFFILPLFAIANTCIAIES), 283–303 (FGIILGLVIGKPLGILLFSSI), 321–341 (ILGAGMLGGIGFTMSIFITLL), and 348–368 (IIVFSKIAIIIASIISGITGF).

Belongs to the NhaA Na(+)/H(+) (TC 2.A.33) antiporter family.

The protein localises to the cell inner membrane. The catalysed reaction is Na(+)(in) + 2 H(+)(out) = Na(+)(out) + 2 H(+)(in). Its function is as follows. Na(+)/H(+) antiporter that extrudes sodium in exchange for external protons. This chain is Na(+)/H(+) antiporter NhaA 1, found in Flavobacterium johnsoniae (strain ATCC 17061 / DSM 2064 / JCM 8514 / BCRC 14874 / CCUG 350202 / NBRC 14942 / NCIMB 11054 / UW101) (Cytophaga johnsonae).